Consider the following 164-residue polypeptide: ATP synthase B' chain, cyanelle (164 aa).

Residues 26–46 (ATLPVMMVQLLVLMLILNAVF) form a helical membrane-spanning segment.

Belongs to the ATPase B chain family. As to quaternary structure, F-type ATPases have 2 components, F(1) - the catalytic core - and F(0) - the membrane proton channel. F(1) has five subunits: alpha(3), beta(3), gamma(1), delta(1), epsilon(1). F(0) has four main subunits: a(1), b(1), b'(1) and c(10-14). The alpha and beta chains form an alternating ring which encloses part of the gamma chain. F(1) is attached to F(0) by a central stalk formed by the gamma and epsilon chains, while a peripheral stalk is formed by the delta, b and b' chains.

It localises to the plastid. Its subcellular location is the cyanelle thylakoid membrane. Its function is as follows. F(1)F(0) ATP synthase produces ATP from ADP in the presence of a proton or sodium gradient. F-type ATPases consist of two structural domains, F(1) containing the extramembraneous catalytic core and F(0) containing the membrane proton channel, linked together by a central stalk and a peripheral stalk. During catalysis, ATP synthesis in the catalytic domain of F(1) is coupled via a rotary mechanism of the central stalk subunits to proton translocation. Component of the F(0) channel, it forms part of the peripheral stalk, linking F(1) to F(0). The b'-subunit is a diverged and duplicated form of b found in plants and photosynthetic bacteria. In Cyanophora paradoxa, this protein is ATP synthase B' chain, cyanelle.